A 498-amino-acid chain; its full sequence is Delta(14)-sterol reductase erg24A (498 aa).

The next 4 membrane-spanning stretches (helical) occupy residues 30–50 (LGAF…TFLC), 91–111 (VTVW…FLPG), 136–156 (ILIL…FVVW), and 163–183 (YVQI…FVYA). Asn-257 carries N-linked (GlcNAc...) asparagine glycosylation. 3 helical membrane-spanning segments follow: residues 275 to 295 (IVLS…MEPA), 302 to 322 (VIMD…VPFI), and 339 to 359 (LREI…FRGA). Residues Lys-363, Arg-367, Trp-395, and 402 to 403 (NY) each bind NADP(+). Residue Asn-429 is glycosylated (N-linked (GlcNAc...) asparagine). The chain crosses the membrane as a helical span at residues 444-464 (VRGWGMIFTYFFLVYFGALLI). Residues Asp-470, 474–478 (CKSKY), and Tyr-485 contribute to the NADP(+) site.

Belongs to the ERG4/ERG24 family.

The protein resides in the endoplasmic reticulum membrane. It participates in steroid metabolism; ergosterol biosynthesis. Its function is as follows. Delta(14)-sterol reductase; part of the third module of ergosterol biosynthesis pathway that includes the late steps of the pathway. Catalyzes the reduction of the C14=C15 double bond within 4,4,24-trimethyl ergosta-8,14,24(28)-trienolto produce 4,4-dimethylfecosterol. The third module or late pathway involves the ergosterol synthesis itself through consecutive reactions that mainly occur in the endoplasmic reticulum (ER) membrane. Firstly, the squalene synthase erg9 catalyzes the condensation of 2 farnesyl pyrophosphate moieties to form squalene, which is the precursor of all steroids. Squalene synthase is crucial for balancing the incorporation of farnesyl diphosphate (FPP) into sterol and nonsterol isoprene synthesis. Secondly, squalene is converted into lanosterol by the consecutive action of the squalene epoxidase erg1 and the lanosterol synthase erg7. Then, the delta(24)-sterol C-methyltransferase erg6 methylates lanosterol at C-24 to produce eburicol. Eburicol is the substrate of the sterol 14-alpha demethylase encoded by cyp51A and cyp51B, to yield 4,4,24-trimethyl ergosta-8,14,24(28)-trienol. The C-14 reductase erg24 then reduces the C14=C15 double bond which leads to 4,4-dimethylfecosterol. A sequence of further demethylations at C-4, involving the C-4 demethylation complex containing the C-4 methylsterol oxidases erg25A or erg25B, the sterol-4-alpha-carboxylate 3-dehydrogenase erg26 and the 3-keto-steroid reductase erg27, leads to the production of fecosterol via 4-methylfecosterol. The C-8 sterol isomerase erg2 then catalyzes the reaction which results in unsaturation at C-7 in the B ring of sterols and thus converts fecosterol to episterol. The sterol-C5-desaturase erg3B then catalyzes the introduction of a C-5 double bond in the B ring to produce 5-dehydroepisterol. The 2 other sterol-C5-desaturases, erg3A and erg3C, seem to be less important in ergosterol biosynthesis. The C-22 sterol desaturase erg5 further converts 5-dehydroepisterol into ergosta-5,7,22,24(28)-tetraen-3beta-ol by forming the C-22(23) double bond in the sterol side chain. Finally, ergosta-5,7,22,24(28)-tetraen-3beta-ol is substrate of the C-24(28) sterol reductases erg4A and erg4B to produce ergosterol. Possible alternative sterol biosynthetic pathways might exist from fecosterol to ergosterol, depending on the activities of the erg3 isoforms. The chain is Delta(14)-sterol reductase erg24A from Aspergillus fumigatus (strain ATCC MYA-4609 / CBS 101355 / FGSC A1100 / Af293) (Neosartorya fumigata).